Consider the following 120-residue polypeptide: Large ribosomal subunit protein bL19 (120 aa).

Belongs to the bacterial ribosomal protein bL19 family.

In terms of biological role, this protein is located at the 30S-50S ribosomal subunit interface and may play a role in the structure and function of the aminoacyl-tRNA binding site. The chain is Large ribosomal subunit protein bL19 from Gloeothece citriformis (strain PCC 7424) (Cyanothece sp. (strain PCC 7424)).